A 222-amino-acid chain; its full sequence is Large ribosomal subunit protein uL1 (222 aa).

It belongs to the universal ribosomal protein uL1 family. As to quaternary structure, part of the 50S ribosomal subunit.

Its function is as follows. Binds directly to 23S rRNA. Probably involved in E site tRNA release. Functionally, protein L1 is also a translational repressor protein, it controls the translation of its operon by binding to its mRNA. The polypeptide is Large ribosomal subunit protein uL1 (Pyrobaculum aerophilum (strain ATCC 51768 / DSM 7523 / JCM 9630 / CIP 104966 / NBRC 100827 / IM2)).